The following is a 154-amino-acid chain: Ribosome maturation factor RimP (154 aa).

The protein belongs to the RimP family.

It localises to the cytoplasm. Its function is as follows. Required for maturation of 30S ribosomal subunits. This Thioalkalivibrio sulfidiphilus (strain HL-EbGR7) protein is Ribosome maturation factor RimP.